The following is a 290-amino-acid chain: MGNLRDIRRRIKSVKNTSQITRAMQMVASAKMRRAQDQAVKGRPYIRALAEVLYHLQDEIDTSNSPLMQTHGGADLVLLVNTDRGLCGGLNANLIKMVREQAPENAHYITIGRKLNAALAKLNERLEATWSLTDPLSLLELKPVFDFIVQKFKAEEYGRVFVAFSGFVNTMVQKPVFRQLLPIEPEPLMNMAKAGGSSLDGADAHKQFLLEPSPAALLDTILPLYVFHGLVQIVLEARASEHSARMVAMKGATENAKNIIGGLTLDYNKARQTQITNELLEITTAMRAME.

Belongs to the ATPase gamma chain family. As to quaternary structure, F-type ATPases have 2 components, CF(1) - the catalytic core - and CF(0) - the membrane proton channel. CF(1) has five subunits: alpha(3), beta(3), gamma(1), delta(1), epsilon(1). CF(0) has three main subunits: a, b and c.

It localises to the cell membrane. Produces ATP from ADP in the presence of a proton gradient across the membrane. The gamma chain is believed to be important in regulating ATPase activity and the flow of protons through the CF(0) complex. This is ATP synthase gamma chain from Akkermansia muciniphila (strain ATCC BAA-835 / DSM 22959 / JCM 33894 / BCRC 81048 / CCUG 64013 / CIP 107961 / Muc).